The primary structure comprises 647 residues: Solute carrier family 23 member 2 (647 aa).

The segment covering 1–11 (MMGVGKNTSKS) has biased composition (polar residues). Positions 1–26 (MMGVGKNTSKSVEVGGSTEGKYEEEA) are disordered. Over 8–109 (TSKSVEVGGS…LCIFLGLQHY (102 aa)) the chain is Cytoplasmic. S69 carries the phosphoserine modification. Position 74 is a phosphothreonine (T74). A Phosphoserine modification is found at S77. At T78 the chain carries Phosphothreonine. The residue at position 80 (S80) is a Phosphoserine. A helical membrane pass occupies residues 110-130 (LTCFSGTIAVPFLLADAMCVG). The Extracellular portion of the chain corresponds to 131 to 138 (DDQWATSQ). Residues 139–159 (LIGTIFFCVGITTLLQTTFGC) traverse the membrane as a helical segment. A topological domain (cytoplasmic) is located at residue R160. A helical membrane pass occupies residues 161–181 (LPLFQASAFAFLAPARAILSL). The Extracellular portion of the chain corresponds to 182–215 (DKWKCNTTEITVANGTAELLEHIWHPRIQEIQGA). 2 N-linked (GlcNAc...) asparagine glycosylation sites follow: N187 and N195. The helical transmembrane segment at 216-236 (IIMSSLIEVVIGLLGLPGALL) threads the bilayer. Over 237 to 263 (RYIGPLTITPTVALIGLSGFQAAGERA) the chain is Cytoplasmic. The helical transmembrane segment at 264–281 (GKHWGIAMLTIFLVLLFS) threads the bilayer. Residues 282 to 285 (QYAR) are Extracellular-facing. Residues 286–299 (NVKFPLPIYKSKKG) constitute an intramembrane region (helical). Residues 300–306 (WTAYKLQ) lie on the Extracellular side of the membrane. Residues 307–327 (LFKMFPIILAILVSWLLCFIF) form a helical membrane-spanning segment. At 328–368 (TVTDVFPSNSTDYGYYARTDARKGVLLVAPWFKVPYPFQWG) the chain is on the cytoplasmic side. Residues 369–389 (MPTVSAAGVIGMLSAVVASII) form a helical membrane-spanning segment. At 390–414 (ESIGDYYACARLSCAPPPPIHAINR) the chain is on the extracellular side. The chain crosses the membrane as a helical span at residues 415 to 435 (GIFVEGLSCVLDGVFGTGNGS). Residues 436–458 (TSSSPNIGVLGITKVGSRRVIQY) are Cytoplasmic-facing. A helical transmembrane segment spans residues 459-479 (GAALMLGLGMIGKFSALFASL). Residues 480-482 (PDP) are Extracellular-facing. The chain crosses the membrane as a helical span at residues 483 to 503 (VLGALFCTLFGMITAVGLSNL). The Cytoplasmic portion of the chain corresponds to 504–513 (QFIDLNSSRN). Residues 514–534 (LFVLGFSIFFGLVLPSYLRQN) traverse the membrane as a helical segment. At 535–544 (PLVTGITGID) the chain is on the extracellular side. Residues 545–565 (QVLNVLLTTAMFVGGCVAFIL) traverse the membrane as a helical segment. The Cytoplasmic segment spans residues 566 to 647 (DNTIPGTPEE…SSDKDSQATV (82 aa)). At T646 the chain carries Phosphothreonine.

Belongs to the nucleobase:cation symporter-2 (NCS2) (TC 2.A.40) family. In terms of assembly, interacts with CLSTN3. In terms of processing, phosphorylated. As to expression, highly expressed in neural, neuroendocrine, exocrine and endothelial tissues and in osteoblasts. Detected in neurons throughout the central nervous system, in meninges and choroid plexus, in the anterior pituitary, the intermediate lobe, in pancreas, adrenal cortex, gastric glands, and in the inner nuclear layer of the retina.

It localises to the cell membrane. It carries out the reaction L-ascorbate(out) + 2 Na(+)(out) = L-ascorbate(in) + 2 Na(+)(in). In terms of biological role, sodium/ascorbate cotransporter. Mediates electrogenic uptake of vitamin C, with a stoichiometry of 2 Na(+) for each ascorbate. The sequence is that of Solute carrier family 23 member 2 (Slc23a2) from Rattus norvegicus (Rat).